The sequence spans 1396 residues: DNA-directed RNA polymerase subunit beta' (1396 aa).

Zn(2+) is bound by residues Cys70, Cys72, Cys85, and Cys88. Residues Asp460, Asp462, and Asp464 each contribute to the Mg(2+) site. Residues Cys807, Cys881, Cys888, and Cys891 each contribute to the Zn(2+) site. Positions 1361-1378 (EPEEIEEPVPEDLEDETA) are enriched in acidic residues. Residues 1361-1396 (EPEEIEEPVPEDLEDETAGADSAQAASEESVAEGKD) are disordered. The segment covering 1379–1389 (GADSAQAASEE) has biased composition (low complexity).

The protein belongs to the RNA polymerase beta' chain family. The RNAP catalytic core consists of 2 alpha, 1 beta, 1 beta' and 1 omega subunit. When a sigma factor is associated with the core the holoenzyme is formed, which can initiate transcription. Mg(2+) serves as cofactor. Zn(2+) is required as a cofactor.

It catalyses the reaction RNA(n) + a ribonucleoside 5'-triphosphate = RNA(n+1) + diphosphate. Its function is as follows. DNA-dependent RNA polymerase catalyzes the transcription of DNA into RNA using the four ribonucleoside triphosphates as substrates. The polypeptide is DNA-directed RNA polymerase subunit beta' (Syntrophotalea carbinolica (strain DSM 2380 / NBRC 103641 / GraBd1) (Pelobacter carbinolicus)).